Here is a 465-residue protein sequence, read N- to C-terminus: Cysteine--tRNA ligase (465 aa).

C27 lines the Zn(2+) pocket. A 'HIGH' region motif is present at residues 29–39 (PTVYDDAHLGH). Zn(2+) contacts are provided by C207, H237, and E241. Positions 269–273 (KMSKS) match the 'KMSKS' region motif. Residue K272 participates in ATP binding.

It belongs to the class-I aminoacyl-tRNA synthetase family. In terms of assembly, monomer. Zn(2+) serves as cofactor.

The protein resides in the cytoplasm. It catalyses the reaction tRNA(Cys) + L-cysteine + ATP = L-cysteinyl-tRNA(Cys) + AMP + diphosphate. The protein is Cysteine--tRNA ligase of Nitratiruptor sp. (strain SB155-2).